The primary structure comprises 741 residues: Polyribonucleotide nucleotidyltransferase (741 aa).

Mg(2+) is bound by residues aspartate 489 and aspartate 495. A KH domain is found at 556-615; sequence PKIDSIQIPVDKIKVVIGKGGETIDKIIAETGVTIDIDEEGLVQIFSSDQDAIDRAKTII. One can recognise an S1 motif domain in the interval 625–693; that stretch reads GEVYTVPVVR…EKGRVDASIK (69 aa). Positions 696–741 are disordered; that stretch reads LPKPEKNEDGENGEEHRHCCCSHHKPDHHSESMEAPKKSDESETKE. Composition is skewed to basic and acidic residues over residues 698–713 and 723–741; these read KPEKNEDGENGEEHRH and HHSESMEAPKKSDESETKE.

It belongs to the polyribonucleotide nucleotidyltransferase family. Mg(2+) serves as cofactor.

It is found in the cytoplasm. It catalyses the reaction RNA(n+1) + phosphate = RNA(n) + a ribonucleoside 5'-diphosphate. Its function is as follows. Involved in mRNA degradation. Catalyzes the phosphorolysis of single-stranded polyribonucleotides processively in the 3'- to 5'-direction. The protein is Polyribonucleotide nucleotidyltransferase of Streptococcus thermophilus (strain ATCC BAA-491 / LMD-9).